Here is a 434-residue protein sequence, read N- to C-terminus: Putative D-alanyl-D-alanine carboxypeptidase (434 aa).

The chain crosses the membrane as a helical; Signal-anchor span at residues 7–25; sequence YLSLLAVSCSVSAAKYPVL.

This sequence belongs to the peptidase S12 family. YfeW subfamily.

It is found in the cell inner membrane. The enzyme catalyses Preferential cleavage: (Ac)2-L-Lys-D-Ala-|-D-Ala. Also transpeptidation of peptidyl-alanyl moieties that are N-acyl substituents of D-alanine.. Penicillin-binding protein. Has low DD-carboxypeptidase activity. The sequence is that of Putative D-alanyl-D-alanine carboxypeptidase from Escherichia coli (strain K12).